A 1038-amino-acid chain; its full sequence is Translation initiation factor IF-2 (1038 aa).

The tract at residues 32–442 (GSALASLSDE…RKGVNTAAPR (411 aa)) is disordered. Low complexity-rich tracts occupy residues 65 to 77 (PPTK…PVAP), 100 to 113 (PAEA…PAQP), and 131 to 147 (PKLA…APAA). Composition is skewed to basic and acidic residues over residues 204–217 (SGGR…KRES) and 275–295 (RSLD…DAGK). Low complexity predominate over residues 311-328 (PSAPAKPAAPTGSSGPAA). Residues 331-344 (PDIKLTRDVIEGHK) show a composition bias toward basic and acidic residues. A compositionally biased stretch (basic residues) spans 422-435 (HHYRRSRPRIRRKG). A tr-type G domain is found at 529–696 (ARPPVVTFLG…TLLTIAELNE (168 aa)). The segment at 538–545 (GHVDHGKT) is G1. 538–545 (GHVDHGKT) contributes to the GTP binding site. The segment at 563–567 (GITQH) is G2. The tract at residues 584–587 (DTPG) is G3. Residues 584 to 588 (DTPGH) and 638 to 641 (NKID) each bind GTP. The G4 stretch occupies residues 638–641 (NKID). A G5 region spans residues 674–676 (SAT).

The protein belongs to the TRAFAC class translation factor GTPase superfamily. Classic translation factor GTPase family. IF-2 subfamily.

It is found in the cytoplasm. In terms of biological role, one of the essential components for the initiation of protein synthesis. Protects formylmethionyl-tRNA from spontaneous hydrolysis and promotes its binding to the 30S ribosomal subunits. Also involved in the hydrolysis of GTP during the formation of the 70S ribosomal complex. This Rhodopirellula baltica (strain DSM 10527 / NCIMB 13988 / SH1) protein is Translation initiation factor IF-2.